Consider the following 471-residue polypeptide: Collagen alpha-3(IV) chain (471 aa).

Positions 1–238 are triple-helical region; sequence GLPGRKGPVG…KGKPGDTGPP (238 aa). The tract at residues 1–241 is disordered; that stretch reads GLPGRKGPVG…PGDTGPPAAG (241 aa). Positions 52 to 61 are enriched in pro residues; sequence MPGPPGPPGS. The short motif at 106–108 is the Cell attachment site element; that stretch reads RGD. The segment covering 127–141 has biased composition (pro residues); the sequence is PGPPGPPGQSGPKGP. A compositionally biased stretch (low complexity) spans 165–174; that stretch reads SAGEPGMQGE. A compositionally biased stretch (pro residues) spans 175-187; sequence PGPPGPPGDPGPC. Residues proline 232 and proline 238 each carry the hydroxyproline modification. In terms of domain architecture, Collagen IV NC1 spans 246-470; sequence GFVFTRHSQT…SRCQVCMKMR (225 aa). 6 cysteine pairs are disulfide-bonded: cysteine 261-cysteine 352, cysteine 294-cysteine 349, cysteine 306-cysteine 312, cysteine 371-cysteine 466, cysteine 405-cysteine 463, and cysteine 417-cysteine 423. Methionine 334 participates in a covalent cross-link: S-Lysyl-methionine sulfilimine (Met-Lys) (interchain with K-452). An S-Lysyl-methionine sulfilimine (Lys-Met) (interchain with M-334) cross-link involves residue lysine 452.

Belongs to the type IV collagen family. As to quaternary structure, there are six type IV collagen isoforms, alpha 1(IV)-alpha 6(IV), each of which can form a triple helix structure with 2 other chains to generate type IV collagen network. The alpha 3(IV) chain forms a triple helical protomer with alpha 4(IV) and alpha 5(IV); this triple helical structure dimerizes through NC1-NC1 domain interactions such that the alpha 3(IV), alpha 4(IV) and alpha 5(IV) chains of one protomer connect with the alpha 5(IV), alpha 4(IV) and alpha 3(IV) chains of the opposite promoter, respectively. Interacts with ITGB3. Associates with LAMB2 at the neuromuscular junction and in GBM. Post-translationally, prolines at the third position of the tripeptide repeating unit (G-X-Y) are hydroxylated in some or all of the chains. In terms of processing, type IV collagens contain numerous cysteine residues which are involved in inter- and intramolecular disulfide bonding. 12 of these, located in the NC1 domain, are conserved in all known type IV collagens. The trimeric structure of the NC1 domains is stabilized by covalent bonds between Lys and Met residues. Post-translationally, phosphorylated. Thought to be phosphorylated by CERT, but CERT does not have kinase activity.

It localises to the secreted. It is found in the extracellular space. Its subcellular location is the extracellular matrix. The protein localises to the basement membrane. Type IV collagen is the major structural component of glomerular basement membranes (GBM), forming a 'chicken-wire' meshwork together with laminins, proteoglycans and entactin/nidogen. In Bos taurus (Bovine), this protein is Collagen alpha-3(IV) chain (COL4A3).